Reading from the N-terminus, the 4835-residue chain is Midasin (4835 aa).

AAA-ATPase protomer regions lie at residues glutamate 12–leucine 161, arginine 324–arginine 689, methionine 797–isoleucine 1049, lysine 1096–threonine 1375, alanine 1489–arginine 1738, and alanine 1821–isoleucine 2110. ATP contacts are provided by residues glycine 31 to threonine 38, glycine 356 to threonine 363, glycine 814 to threonine 821, glycine 1127 to threonine 1134, glycine 1513 to serine 1520, and glycine 1839 to serine 1846. Residues serine 2197–lysine 4058 are linker. Disordered stretches follow at residues aspartate 4033–valine 4056 and isoleucine 4108–proline 4523. 5 stretches are compositionally biased toward acidic residues: residues glutamate 4109 to alanine 4133, glutamate 4141 to serine 4150, alanine 4226 to glutamine 4241, valine 4282 to aspartate 4291, and asparagine 4315 to asparagine 4330. Residues isoleucine 4331 to glutamine 4346 are compositionally biased toward polar residues. 3 stretches are compositionally biased toward basic and acidic residues: residues lysine 4347–asparagine 4360, glutamate 4394–alanine 4415, and valine 4429–arginine 4438. The span at histidine 4468 to serine 4477 shows a compositional bias: polar residues. Residues serine 4478–asparagine 4488 show a composition bias toward basic and acidic residues. Residues glutamine 4629 to leucine 4818 form the VWFA domain.

This sequence belongs to the midasin family. In terms of assembly, associates with pre-60S ribosomes in the nucleoplasm.

The protein resides in the nucleus. It localises to the nucleolus. The protein localises to the nucleoplasm. Its function is as follows. Nuclear chaperone required for maturation and nuclear export of pre-60S ribosome subunits. Functions at successive maturation steps to remove ribosomal factors at critical transition points, first driving the exit of early pre-60S particles from the nucleolus and then driving late pre-60S particles from the nucleus. This is Midasin (MDN1) from Giardia intestinalis (Giardia lamblia).